A 272-amino-acid chain; its full sequence is ATP synthase subunit a (272 aa).

The next 7 membrane-spanning stretches (helical) occupy residues 39-59 (GFWAVHVDTLGWSLFMGLIFI), 103-123 (VAPLALTIFVWVFLMNSLKWI), 124-144 (PVDYIPGLAHAMGLPYFKIVP), 152-172 (FGISLGVFLLIIFYSIKVKGV), 181-201 (FTPFNHWALIPFNLFLEIIGL), 221-241 (VVFILIALLPFYVQWGLNVPW), and 242-262 (AIFHILVIPLQAFIFMVLTVV).

The protein belongs to the ATPase A chain family. As to quaternary structure, F-type ATPases have 2 components, CF(1) - the catalytic core - and CF(0) - the membrane proton channel. CF(1) has five subunits: alpha(3), beta(3), gamma(1), delta(1), epsilon(1). CF(0) has three main subunits: a(1), b(2) and c(9-12). The alpha and beta chains form an alternating ring which encloses part of the gamma chain. CF(1) is attached to CF(0) by a central stalk formed by the gamma and epsilon chains, while a peripheral stalk is formed by the delta and b chains.

It localises to the cell inner membrane. Its function is as follows. Key component of the proton channel; it plays a direct role in the translocation of protons across the membrane. The protein is ATP synthase subunit a of Ectopseudomonas mendocina (strain ymp) (Pseudomonas mendocina).